The sequence spans 456 residues: tRNA-2-methylthio-N(6)-dimethylallyladenosine synthase (456 aa).

The MTTase N-terminal domain maps to 18 to 134 (KKLFIETYGC…LPDLVASVEA (117 aa)). [4Fe-4S] cluster is bound by residues C27, C63, C98, C172, C176, and C179. Residues 158-390 (CGNHISGFVS…IELQNRLSAE (233 aa)) form the Radical SAM core domain. The TRAM domain occupies 393 to 456 (ARDVGKTFEV…SATLKGEEVF (64 aa)).

Belongs to the methylthiotransferase family. MiaB subfamily. Monomer. [4Fe-4S] cluster is required as a cofactor.

The protein resides in the cytoplasm. The catalysed reaction is N(6)-dimethylallyladenosine(37) in tRNA + (sulfur carrier)-SH + AH2 + 2 S-adenosyl-L-methionine = 2-methylsulfanyl-N(6)-dimethylallyladenosine(37) in tRNA + (sulfur carrier)-H + 5'-deoxyadenosine + L-methionine + A + S-adenosyl-L-homocysteine + 2 H(+). Functionally, catalyzes the methylthiolation of N6-(dimethylallyl)adenosine (i(6)A), leading to the formation of 2-methylthio-N6-(dimethylallyl)adenosine (ms(2)i(6)A) at position 37 in tRNAs that read codons beginning with uridine. This Phocaeicola vulgatus (strain ATCC 8482 / DSM 1447 / JCM 5826 / CCUG 4940 / NBRC 14291 / NCTC 11154) (Bacteroides vulgatus) protein is tRNA-2-methylthio-N(6)-dimethylallyladenosine synthase.